The chain runs to 314 residues: Solute carrier family 25 member 44 (314 aa).

3 Solcar repeats span residues 18–100, 107–210, and 220–302; these read KKFY…TRKF, SNTV…YAEQ, and PHIV…LKKL. Helical transmembrane passes span 20–42, 71–90, 113–133, 185–201, 222–239, and 278–296; these read FYVF…TLIR, TGLY…GQCY, LVAG…IDVV, GYVA…AVWW, IVFQ…ASIL, and LSAR…VVGY.

This sequence belongs to the mitochondrial carrier (TC 2.A.29) family.

It localises to the mitochondrion membrane. It carries out the reaction L-valine(in) = L-valine(out). It catalyses the reaction L-leucine(in) = L-leucine(out). Its function is as follows. Mitochondrial solute transporter which transports branched-chain amino acid (BCAA; valine, leucine and isoleucine) into mitochondria in brown adipose tissue (BAT). BAT is involved in BCAA catabolism and actively utilizes BCAA in the mitochondria for thermogenesis. The chain is Solute carrier family 25 member 44 from Pongo abelii (Sumatran orangutan).